The primary structure comprises 264 residues: Thymidylate synthase (264 aa).

Arg21 is a binding site for dUMP. Position 51 (His51) interacts with (6R)-5,10-methylene-5,6,7,8-tetrahydrofolate. Arg126–Arg127 contributes to the dUMP binding site. The Nucleophile role is filled by Cys146. DUMP contacts are provided by residues Arg166–Asp169, Asn177, and His207–Tyr209. Asp169 provides a ligand contact to (6R)-5,10-methylene-5,6,7,8-tetrahydrofolate. Ala263 is a (6R)-5,10-methylene-5,6,7,8-tetrahydrofolate binding site.

Belongs to the thymidylate synthase family. Bacterial-type ThyA subfamily. As to quaternary structure, homodimer.

The protein localises to the cytoplasm. The catalysed reaction is dUMP + (6R)-5,10-methylene-5,6,7,8-tetrahydrofolate = 7,8-dihydrofolate + dTMP. Its pathway is pyrimidine metabolism; dTTP biosynthesis. Functionally, catalyzes the reductive methylation of 2'-deoxyuridine-5'-monophosphate (dUMP) to 2'-deoxythymidine-5'-monophosphate (dTMP) while utilizing 5,10-methylenetetrahydrofolate (mTHF) as the methyl donor and reductant in the reaction, yielding dihydrofolate (DHF) as a by-product. This enzymatic reaction provides an intracellular de novo source of dTMP, an essential precursor for DNA biosynthesis. The chain is Thymidylate synthase from Hyphomonas neptunium (strain ATCC 15444).